The chain runs to 1236 residues: ATP-dependent helicase/nuclease subunit A (1236 aa).

Positions 4–473 (VKWTKEQQQA…VNLFKNFRSR (470 aa)) constitute a UvrD-like helicase ATP-binding domain. 25-32 (AAAGSGKT) serves as a coordination point for ATP. In terms of domain architecture, UvrD-like helicase C-terminal spans 512 to 806 (YEDKSLVGGP…RIMSIHKSKG (295 aa)).

The protein belongs to the helicase family. AddA subfamily. Heterodimer of AddA and AddB/RexB. Mg(2+) serves as cofactor.

The enzyme catalyses Couples ATP hydrolysis with the unwinding of duplex DNA by translocating in the 3'-5' direction.. The catalysed reaction is ATP + H2O = ADP + phosphate + H(+). Functionally, the heterodimer acts as both an ATP-dependent DNA helicase and an ATP-dependent, dual-direction single-stranded exonuclease. Recognizes the chi site generating a DNA molecule suitable for the initiation of homologous recombination. The AddA nuclease domain is required for chi fragment generation; this subunit has the helicase and 3' -&gt; 5' nuclease activities. The protein is ATP-dependent helicase/nuclease subunit A of Clostridium novyi (strain NT).